The chain runs to 60 residues: Translational regulator CsrA (60 aa).

This sequence belongs to the CsrA/RsmA family. Homodimer; the beta-strands of each monomer intercalate to form a hydrophobic core, while the alpha-helices form wings that extend away from the core.

The protein localises to the cytoplasm. Functionally, a key translational regulator that binds mRNA to regulate translation initiation and/or mRNA stability. Mediates global changes in gene expression, shifting from rapid growth to stress survival by linking envelope stress, the stringent response and the catabolite repression systems. Usually binds in the 5'-UTR; binding at or near the Shine-Dalgarno sequence prevents ribosome-binding, repressing translation, binding elsewhere in the 5'-UTR can activate translation and/or stabilize the mRNA. Its function is antagonized by small RNA(s). This is Translational regulator CsrA from Histophilus somni (strain 2336) (Haemophilus somnus).